We begin with the raw amino-acid sequence, 325 residues long: NADH-quinone oxidoreductase subunit H (325 aa).

Helical transmembrane passes span 11-31 (ILLSILKAVVILLVVVTCGAF), 50-69 (NRVGWGGSLQLVADMIKMFF), 81-101 (VIFTLAPMIAFTSLLLSFAIV), 114-134 (IGILFFLMMAGLAVYAVLFAG), 154-174 (VSYEVFLGLSLMGVVAQAGSF), 186-206 (LWNVIPQFFGFVTFAIAGVAV), 237-257 (FFVGEYIGIVTVSALMVTLFF), 265-285 (LPPFVWFALKTAFFMMMFILI), and 304-324 (VCLPLTLINLLVTAAVILWQA).

It belongs to the complex I subunit 1 family. In terms of assembly, NDH-1 is composed of 13 different subunits. Subunits NuoA, H, J, K, L, M, N constitute the membrane sector of the complex.

The protein resides in the cell inner membrane. The catalysed reaction is a quinone + NADH + 5 H(+)(in) = a quinol + NAD(+) + 4 H(+)(out). NDH-1 shuttles electrons from NADH, via FMN and iron-sulfur (Fe-S) centers, to quinones in the respiratory chain. The immediate electron acceptor for the enzyme in this species is believed to be ubiquinone. Couples the redox reaction to proton translocation (for every two electrons transferred, four hydrogen ions are translocated across the cytoplasmic membrane), and thus conserves the redox energy in a proton gradient. This subunit may bind ubiquinone. The chain is NADH-quinone oxidoreductase subunit H from Salmonella agona (strain SL483).